Consider the following 115-residue polypeptide: NADH-ubiquinone oxidoreductase chain 3 (115 aa).

3 helical membrane-spanning segments follow: residues 4 to 24 (LMAL…AFWL), 55 to 75 (FFLV…LLPL), and 84 to 104 (INIM…GLAY).

Belongs to the complex I subunit 3 family. Core subunit of respiratory chain NADH dehydrogenase (Complex I) which is composed of 45 different subunits. Interacts with TMEM186. Interacts with TMEM242.

It localises to the mitochondrion inner membrane. It catalyses the reaction a ubiquinone + NADH + 5 H(+)(in) = a ubiquinol + NAD(+) + 4 H(+)(out). Its function is as follows. Core subunit of the mitochondrial membrane respiratory chain NADH dehydrogenase (Complex I) which catalyzes electron transfer from NADH through the respiratory chain, using ubiquinone as an electron acceptor. Essential for the catalytic activity of complex I. The protein is NADH-ubiquinone oxidoreductase chain 3 of Peromyscus melanotis (Black-eared mouse).